The following is a 224-amino-acid chain: 2-C-methyl-D-erythritol 4-phosphate cytidylyltransferase (224 aa).

The protein belongs to the IspD/TarI cytidylyltransferase family. IspD subfamily.

It carries out the reaction 2-C-methyl-D-erythritol 4-phosphate + CTP + H(+) = 4-CDP-2-C-methyl-D-erythritol + diphosphate. The protein operates within isoprenoid biosynthesis; isopentenyl diphosphate biosynthesis via DXP pathway; isopentenyl diphosphate from 1-deoxy-D-xylulose 5-phosphate: step 2/6. In terms of biological role, catalyzes the formation of 4-diphosphocytidyl-2-C-methyl-D-erythritol from CTP and 2-C-methyl-D-erythritol 4-phosphate (MEP). The polypeptide is 2-C-methyl-D-erythritol 4-phosphate cytidylyltransferase (Bordetella petrii (strain ATCC BAA-461 / DSM 12804 / CCUG 43448)).